The chain runs to 404 residues: Keratin, type I cuticular Ha3-I (404 aa).

Residues 1-56 are head; sequence MSYSCGLPSLSCRTSCSSRPCVPPSCHGCTLPGACNIPANVSNCNWFCEGSFNGSE. Positions 56 to 367 constitute an IF rod domain; it reads EKETMQFLND…SLLESEDCKL (312 aa). The interval 57 to 91 is coil 1A; sequence KETMQFLNDRLASYLEKVRQLERDNAELENLIRER. The tract at residues 92-102 is linker 1; that stretch reads SQQQEPLVCAS. Residues 103 to 203 are coil 1B; the sequence is YQSYFKTIEE…HEQEVNTLRC (101 aa). Positions 204–219 are linker 12; that stretch reads QLGDRLNVEVDAAPTV. Residues 220–363 are coil 2; the sequence is DLNQVLNETR…NTYRSLLESE (144 aa). The tail stretch occupies residues 364–404; it reads DCKLPSNPCATTNACDKSTGPCISNPCGLRARCGPCNTFGY.

This sequence belongs to the intermediate filament family. In terms of tissue distribution, expressed in the hair follicles.

This is Keratin, type I cuticular Ha3-I (KRT33A) from Homo sapiens (Human).